The following is a 129-amino-acid chain: HTH-type transcriptional regulator HmrR (129 aa).

The HTH merR-type domain occupies 1–68 (MNIGEASERS…VEECRQLLAL (68 aa)). Residues 4-23 (GEASERSGLPSKTIRYYEDI) constitute a DNA-binding region (H-T-H motif).

In terms of assembly, homodimer.

Its subcellular location is the cytoplasm. In terms of biological role, regulates the transcription of actP. It detects cytoplasmic copper stress and activates transcription in response to increasing copper concentrations. In the absence of copper, it negatively regulates the transcription of actP. In Rhizobium leguminosarum bv. viciae, this protein is HTH-type transcriptional regulator HmrR (hmrR).